Reading from the N-terminus, the 213-residue chain is Phosphatidylserine decarboxylase proenzyme (213 aa).

Serine 182 acts as the Schiff-base intermediate with substrate; via pyruvic acid in catalysis. Position 182 is a pyruvic acid (Ser); by autocatalysis (serine 182).

It belongs to the phosphatidylserine decarboxylase family. PSD-A subfamily. As to quaternary structure, heterodimer of a large membrane-associated beta subunit and a small pyruvoyl-containing alpha subunit. Pyruvate serves as cofactor. In terms of processing, is synthesized initially as an inactive proenzyme. Formation of the active enzyme involves a self-maturation process in which the active site pyruvoyl group is generated from an internal serine residue via an autocatalytic post-translational modification. Two non-identical subunits are generated from the proenzyme in this reaction, and the pyruvate is formed at the N-terminus of the alpha chain, which is derived from the carboxyl end of the proenzyme. The post-translation cleavage follows an unusual pathway, termed non-hydrolytic serinolysis, in which the side chain hydroxyl group of the serine supplies its oxygen atom to form the C-terminus of the beta chain, while the remainder of the serine residue undergoes an oxidative deamination to produce ammonia and the pyruvoyl prosthetic group on the alpha chain.

The protein localises to the cell membrane. It carries out the reaction a 1,2-diacyl-sn-glycero-3-phospho-L-serine + H(+) = a 1,2-diacyl-sn-glycero-3-phosphoethanolamine + CO2. It participates in phospholipid metabolism; phosphatidylethanolamine biosynthesis; phosphatidylethanolamine from CDP-diacylglycerol: step 2/2. Catalyzes the formation of phosphatidylethanolamine (PtdEtn) from phosphatidylserine (PtdSer). This is Phosphatidylserine decarboxylase proenzyme from Geotalea uraniireducens (strain Rf4) (Geobacter uraniireducens).